The sequence spans 137 residues: Small ribosomal subunit protein uS12 (137 aa).

The segment at 1–26 (MPTINQLVRKPRQSKIKKSTSPALNK) is disordered. A compositionally biased stretch (basic residues) spans 9 to 18 (RKPRQSKIKK).

The protein belongs to the universal ribosomal protein uS12 family. As to quaternary structure, part of the 30S ribosomal subunit. Contacts proteins S8 and S17. May interact with IF1 in the 30S initiation complex.

Functionally, with S4 and S5 plays an important role in translational accuracy. In terms of biological role, interacts with and stabilizes bases of the 16S rRNA that are involved in tRNA selection in the A site and with the mRNA backbone. Located at the interface of the 30S and 50S subunits, it traverses the body of the 30S subunit contacting proteins on the other side and probably holding the rRNA structure together. The combined cluster of proteins S8, S12 and S17 appears to hold together the shoulder and platform of the 30S subunit. The protein is Small ribosomal subunit protein uS12 of Listeria innocua serovar 6a (strain ATCC BAA-680 / CLIP 11262).